The following is a 480-amino-acid chain: uncharacterized protein (480 aa).

The segment at residues 16–46 is a DNA-binding region (zn(2)-C6 fungal-type); that stretch reads CDRCRRRKIRCTGSDIPGQPCLACQKAHADC. Low complexity predominate over residues 298 to 307; it reads SFGASVSPKS. Positions 298 to 325 are disordered; that stretch reads SFGASVSPKSTPGSNSTGAAVDTNSVHS. The span at 308–325 shows a compositional bias: polar residues; sequence TPGSNSTGAAVDTNSVHS.

The protein localises to the cytoplasm. It localises to the nucleus. This is an uncharacterized protein from Schizosaccharomyces pombe (strain 972 / ATCC 24843) (Fission yeast).